Reading from the N-terminus, the 568-residue chain is uncharacterized protein (568 aa).

This is an uncharacterized protein from Rickettsia prowazekii (strain Madrid E).